A 109-amino-acid polypeptide reads, in one-letter code: Protease inhibitor SIL-V2 (109 aa).

2 cysteine pairs are disulfide-bonded: C30-C45 and C67-C97.

It belongs to the protease inhibitor I16 (SSI) family. Homodimer.

The protein resides in the secreted. The chain is Protease inhibitor SIL-V2 from Streptomyces orinoci (Streptoverticillium orinoci).